The chain runs to 520 residues: D-aminopeptidase (520 aa).

The active-site Nucleophile is the Ser62. The active-site Proton donor/acceptor is Lys65. The segment at 477 to 487 (QRSMDAPSPGE) is important for specificity. Asp481 serves as a coordination point for substrate.

Belongs to the peptidase S12 family. In terms of assembly, homodimer.

It catalyses the reaction Release of an N-terminal D-amino acid from a peptide, Xaa-|-Yaa-, in which Xaa is preferably D-Ala, D-Ser or D-Thr. D-amino acid amides and methyl esters also are hydrolyzed, as is glycine amide.. Inhibited by beta-lactam compounds such as 6-aminopenicillic acid, 7-aminocephalosporanic acid, benzylpenicillin and ampicillin. Inhibited by p-chloromercuribenzoate. In terms of biological role, hydrolyzes N-terminal residues in D-amino acid-containing peptides. The sequence is that of D-aminopeptidase from Brucella anthropi (strain ATCC 49188 / DSM 6882 / CCUG 24695 / JCM 21032 / LMG 3331 / NBRC 15819 / NCTC 12168 / Alc 37) (Ochrobactrum anthropi).